The sequence spans 283 residues: K88 fimbrial protein AC (283 aa).

The signal sequence occupies residues 1–21 (MKKTLIALAIAASAASGMAHA).

The protein belongs to the fimbrial K88 protein family. K88 fimbria, 0.1-1 micrometer in length and 7 nanometers in diameter, is composed of about 100 identical subunits.

It localises to the fimbrium. K88 major fimbrial subunit. Fimbriae (also called pili), are polar filaments radiating from the surface of the bacterium to a length of 0.5-1.5 micrometers and numbering 100-300 per cell. They enable bacteria to colonize the epithelium of specific host organs. The chain is K88 fimbrial protein AC (faeG) from Escherichia coli.